The sequence spans 299 residues: MLKIGSHVSMSGKKMLLAASEEAASYGANTFMIYTGAPQNTKRKSIEELNIEAGRQHMQAHGIEEIVVHAPYIINIGNTTNLDTFSLGVDFLRAEIERTEAIGAKQLVLHPGAHVGAGVEAGLRQIIRGLNEVLTREQNVQIALETMAGKGSECGRTFEELAYIIDGVAYNDKLSVCFDTCHTHDAGYDIVNDFDGVLEEFDRIIGLGRLKVLHINDSKNPRGSRKDRHENIGFGHIGFAALNYIVHHPQLEDIPKILETPYVGEDKNNKKPPYKHEIAMLRAQSFDDQLLEKINAGAE.

Zn(2+) is bound by residues His69, His110, Glu145, Asp179, His182, His214, Asp227, His229, and Glu259.

Belongs to the AP endonuclease 2 family. Zn(2+) is required as a cofactor.

The catalysed reaction is Endonucleolytic cleavage to 5'-phosphooligonucleotide end-products.. Its function is as follows. Endonuclease IV plays a role in DNA repair. It cleaves phosphodiester bonds at apurinic or apyrimidinic (AP) sites, generating a 3'-hydroxyl group and a 5'-terminal sugar phosphate. This Geobacillus kaustophilus (strain HTA426) protein is Probable endonuclease 4.